Reading from the N-terminus, the 234-residue chain is ATP-dependent dethiobiotin synthetase BioD (234 aa).

An ATP-binding site is contributed by 12–17 (GAGKTI). A Mg(2+)-binding site is contributed by Thr-16. The active site involves Lys-39. Residue Thr-43 coordinates substrate. Residues Asp-47, 108-111 (EGLG), 168-169 (SC), and 200-202 (PYL) contribute to the ATP site. Residues Asp-47 and Glu-108 each contribute to the Mg(2+) site.

It belongs to the dethiobiotin synthetase family. Homodimer. The cofactor is Mg(2+).

The protein localises to the cytoplasm. It catalyses the reaction (7R,8S)-7,8-diammoniononanoate + CO2 + ATP = (4R,5S)-dethiobiotin + ADP + phosphate + 3 H(+). The catalysed reaction is (7R,8S)-8-amino-7-(carboxyamino)nonanoate + ATP = (4R,5S)-dethiobiotin + ADP + phosphate + H(+). Its pathway is cofactor biosynthesis; biotin biosynthesis; biotin from 7,8-diaminononanoate: step 1/2. In terms of biological role, catalyzes a mechanistically unusual reaction, the ATP-dependent insertion of CO2 between the N7 and N8 nitrogen atoms of 7,8-diaminopelargonic acid (DAPA, also called 7,8-diammoniononanoate) to form a ureido ring. This cyanobacterium does not encode bioA (which catalyzes the formation of the precursor for this reaction in the cannonical pathway), instead it encodes bioU, which replaces bioA and also performs the first half of the cannonical BioD reaction. Thus in this organism BioD has a different substrate. This Rippkaea orientalis (strain PCC 8801 / RF-1) (Cyanothece sp. (strain PCC 8801)) protein is ATP-dependent dethiobiotin synthetase BioD.